Here is a 512-residue protein sequence, read N- to C-terminus: Methionine--tRNA ligase (512 aa).

The 'HIGH' region signature appears at 11–21 (YYASGKPHIGH). Zn(2+)-binding residues include Cys126, Cys129, Cys143, and His147. Positions 301-305 (KMSKS) match the 'KMSKS' region motif. Position 304 (Lys304) interacts with ATP.

This sequence belongs to the class-I aminoacyl-tRNA synthetase family. MetG type 2A subfamily. As to quaternary structure, monomer. Zn(2+) serves as cofactor.

It localises to the cytoplasm. It carries out the reaction tRNA(Met) + L-methionine + ATP = L-methionyl-tRNA(Met) + AMP + diphosphate. In terms of biological role, is required not only for elongation of protein synthesis but also for the initiation of all mRNA translation through initiator tRNA(fMet) aminoacylation. This chain is Methionine--tRNA ligase (metG), found in Mycoplasma pneumoniae (strain ATCC 29342 / M129 / Subtype 1) (Mycoplasmoides pneumoniae).